Here is an 849-residue protein sequence, read N- to C-terminus: Glycogen phosphorylase (849 aa).

K679 is modified (N6-(pyridoxal phosphate)lysine).

The protein belongs to the glycogen phosphorylase family. Pyridoxal 5'-phosphate is required as a cofactor.

The enzyme catalyses [(1-&gt;4)-alpha-D-glucosyl](n) + phosphate = [(1-&gt;4)-alpha-D-glucosyl](n-1) + alpha-D-glucose 1-phosphate. Its function is as follows. Phosphorylase is an important allosteric enzyme in carbohydrate metabolism. Enzymes from different sources differ in their regulatory mechanisms and in their natural substrates. However, all known phosphorylases share catalytic and structural properties. The sequence is that of Glycogen phosphorylase (glgP) from Synechocystis sp. (strain ATCC 27184 / PCC 6803 / Kazusa).